The sequence spans 128 residues: Holin-like protein CidA (128 aa).

Transmembrane regions (helical) follow at residues 23–43, 58–78, and 84–104; these read LIVE…IVIF, IGAL…AVGI, and ILAE…FVVM.

It belongs to the CidA/LrgA family. CidA subfamily.

It is found in the cell membrane. In terms of biological role, increases the activity of extracellular murein hydrolases possibly by mediating their export via hole formation. Inhibited by the antiholin-like proteins LrgAB. In an unstressed cell, the LrgAB products probably inhibit the function of the CidA protein. When a cell is stressed by the addition of antibiotics or by other factors in the environment, CidA possibly oligomerizes within the bacterial cell membrane, creating lesions that disrupt the proton motive force, which in turn results in loss of cell viability. These lesions are also hypothesized to regulate the subsequent cell lysis by either allowing the murein hydrolases access to the cell wall substrate and/or regulating their activity by a possible change in the cell wall pH that results from loss of membrane potential. This chain is Holin-like protein CidA, found in Bacillus licheniformis (strain ATCC 14580 / DSM 13 / JCM 2505 / CCUG 7422 / NBRC 12200 / NCIMB 9375 / NCTC 10341 / NRRL NRS-1264 / Gibson 46).